The sequence spans 476 residues: TOM1-like protein 1 (476 aa).

The VHS domain maps to 22–154 (ATFAGVQTED…DLVKKGVQFP (133 aa)). Positions 155–179 (PSEAEAETARQETAQISSNPPTSVP) are disordered. Residues 170–179 (ISSNPPTSVP) show a composition bias toward polar residues. Serine 171 carries the phosphoserine modification. A GAT domain is found at 200–288 (EQIGKLHSEL…AILGYERFTR (89 aa)). Over residues 298–314 (KNQKEATNTTSEPSAPS) the composition is skewed to polar residues. Residues 298–327 (KNQKEATNTTSEPSAPSQDLLDLSPSPRMP) form a disordered region. Phosphoserine occurs at positions 314, 321, and 323. The interaction with GRB2 stretch occupies residues 392–395 (YDNF). The short motif at 421–425 (LPPLP) is the SH3-binding element. Residues 442–445 (YEVM) form an interaction with PIK3R1 region. Residue tyrosine 460 is modified to Phosphotyrosine. The short motif at 460-463 (YEEI) is the SH2-binding element.

It belongs to the TOM1 family. In terms of assembly, interacts with FYN, GRB2 and PIK3R1 when phosphorylated. Interacts with LYN. Phosphorylated on tyrosines by FYN and LYN.

It is found in the golgi apparatus. It localises to the golgi stack. Its subcellular location is the endosome membrane. The protein resides in the cytoplasm. The protein localises to the membrane. Functionally, probable adapter protein involved in signaling pathways. Interacts with the SH2 and SH3 domains of various signaling proteins when it is phosphorylated. May promote FYN activation, possibly by disrupting intramolecular SH3-dependent interactions. The chain is TOM1-like protein 1 (TOM1L1) from Homo sapiens (Human).